Consider the following 291-residue polypeptide: Membrane protein insertase YidC (291 aa).

A signal peptide spans 1–19 (MKKKALLPLLLGVMVFLAG). Residue Cys20 is the site of N-palmitoyl cysteine attachment. Cys20 is lipidated: S-diacylglycerol cysteine. A run of 4 helical transmembrane segments spans residues 56–76 (YGIA…PFML), 134–154 (ALGC…YFVL), 170–190 (WFNL…LYFI), and 211–231 (MIVS…ALGL). The interval 266-291 (FKENNSNSNKKGKNTQVVSKNNKKKK) is disordered.

This sequence belongs to the OXA1/ALB3/YidC family. Type 2 subfamily.

It localises to the cell membrane. In terms of biological role, required for the insertion and/or proper folding and/or complex formation of integral membrane proteins into the membrane. Involved in integration of membrane proteins that insert both dependently and independently of the Sec translocase complex, as well as at least some lipoproteins. In Staphylococcus haemolyticus (strain JCSC1435), this protein is Membrane protein insertase YidC.